We begin with the raw amino-acid sequence, 315 residues long: N-acetyl-D-glutamate racemase (315 aa).

Residues Asp-147, Glu-173, and Asp-196 each contribute to the Mg(2+) site.

It belongs to the mandelate racemase/muconate lactonizing enzyme family. Mg(2+) serves as cofactor.

The enzyme catalyses N-acetyl-D-glutamate = N-acetyl-L-glutamate. The protein operates within amino-acid degradation. Functionally, racemase involved in a deamination-independent D-glutamate degradation pathway, named the DgcN-DgcA pathway. Catalyzes the conversion of N-acetyl-D-glutamate to N-acetyl-L-glutamate. Also shows racemase activity towards the dipeptide L-Ala-D-Glu, a key constituent of peptidoglycan muropeptides, suggesting that it may also contribute to the degradation of peptidoglycans. The chain is N-acetyl-D-glutamate racemase from Pseudoalteromonas sp.